A 238-amino-acid polypeptide reads, in one-letter code: Large ribosomal subunit protein uL3 (238 aa).

Disordered stretches follow at residues 140-164 (SHRS…KMPG) and 212-238 (LPKE…QEGA). Gln151 is subject to N5-methylglutamine. Over residues 225–238 (AGGEAEAAAQQEGA) the composition is skewed to low complexity.

It belongs to the universal ribosomal protein uL3 family. Part of the 50S ribosomal subunit. Forms a cluster with proteins L14 and L19. In terms of processing, methylated by PrmB.

One of the primary rRNA binding proteins, it binds directly near the 3'-end of the 23S rRNA, where it nucleates assembly of the 50S subunit. In Bradyrhizobium diazoefficiens (strain JCM 10833 / BCRC 13528 / IAM 13628 / NBRC 14792 / USDA 110), this protein is Large ribosomal subunit protein uL3.